Consider the following 363-residue polypeptide: Cell division cycle-associated protein 3 (363 aa).

Over residues 1-12 (MGSAESKAQVTP) the composition is skewed to polar residues. 4 disordered regions span residues 1 to 81 (MGSA…TPLR), 126 to 152 (VESQTAPPAGEHVNDHEVEPSVEKAET), 191 to 210 (MNDQEESPIAETMNDQEESP), and 231 to 363 (ENLN…HSNS). The interval 93–152 (KQLSEVFVAEDSSTEGGPLGFTGPEATNLERQVVESQTAPPAGEHVNDHEVEPSVEKAET) is F-box-like. Residues 137–152 (HVNDHEVEPSVEKAET) show a composition bias toward basic and acidic residues. Residues 192 to 210 (NDQEESPIAETMNDQEESP) are compositionally biased toward acidic residues. Residues 259-285 (SVVSTESTQATGQQQKTRGKSPRSSGV) are compositionally biased toward polar residues. Positions 296–308 (LLSSSSGRSPLRI) are enriched in low complexity. A compositionally biased stretch (polar residues) spans 311–321 (EDNSPNTNTQH). Positions 353 to 355 (KEN) match the KEN box motif.

Interacts with wee1, when wee1 is phosphorylated at 'Ser-38'. Phosphorylated. In terms of processing, ubiquitinated and degraded by the APC/C-Cdh1 complex during G1 phase.

It localises to the cytoplasm. The protein resides in the cytosol. It functions in the pathway protein modification; protein ubiquitination. F-box-like protein which is required for entry into mitosis. Acts by participating in E3 ligase complexes that mediate the ubiquitination and degradation of WEE1 kinase at G2/M phase. The sequence is that of Cell division cycle-associated protein 3 (cdca3) from Xenopus laevis (African clawed frog).